The primary structure comprises 251 residues: Ditrans,polycis-undecaprenyl-diphosphate synthase ((2E,6E)-farnesyl-diphosphate specific) (251 aa).

The active site involves D26. Residue D26 coordinates Mg(2+). Residues 27–30 (GNGR), W31, R39, H43, and 71–73 (SSE) contribute to the substrate site. N74 functions as the Proton acceptor in the catalytic mechanism. Residues W75, R77, R194, and 200–202 (RIS) contribute to the substrate site. A Mg(2+)-binding site is contributed by E213.

Belongs to the UPP synthase family. Homodimer. It depends on Mg(2+) as a cofactor.

The enzyme catalyses 8 isopentenyl diphosphate + (2E,6E)-farnesyl diphosphate = di-trans,octa-cis-undecaprenyl diphosphate + 8 diphosphate. Its function is as follows. Catalyzes the sequential condensation of isopentenyl diphosphate (IPP) with (2E,6E)-farnesyl diphosphate (E,E-FPP) to yield (2Z,6Z,10Z,14Z,18Z,22Z,26Z,30Z,34E,38E)-undecaprenyl diphosphate (di-trans,octa-cis-UPP). UPP is the precursor of glycosyl carrier lipid in the biosynthesis of bacterial cell wall polysaccharide components such as peptidoglycan and lipopolysaccharide. The sequence is that of Ditrans,polycis-undecaprenyl-diphosphate synthase ((2E,6E)-farnesyl-diphosphate specific) from Buchnera aphidicola subsp. Acyrthosiphon pisum (strain APS) (Acyrthosiphon pisum symbiotic bacterium).